Here is a 335-residue protein sequence, read N- to C-terminus: Zinc finger protein 396 (335 aa).

An SCAN box domain is found at 52–134 (RQQFRQFGYQ…TMLEDVEREL (83 aa)). 3 consecutive C2H2-type zinc fingers follow at residues 251-273 (QKCD…QRIH), 279-301 (YACD…RRTH), and 307-329 (YKCH…RKRH).

The protein belongs to the krueppel C2H2-type zinc-finger protein family. As to quaternary structure, isoforms 1 and 2 can both homo- and hetero-associate. Expressed strongly in liver, moderately in skeletal muscle and weakly in kidney, pancreas, spleen and prostate.

It localises to the nucleus. It is found in the cytoplasm. In terms of biological role, isoform 1 and isoform 2 act as DNA-dependent transcriptional repressors. The chain is Zinc finger protein 396 (ZNF396) from Homo sapiens (Human).